The following is a 203-amino-acid chain: Orotate phosphoribosyltransferase (203 aa).

Residues Arg-94, Lys-98, His-100, and Glu-120–Ser-128 contribute to the 5-phospho-alpha-D-ribose 1-diphosphate site. Residue Ser-124 participates in orotate binding.

This sequence belongs to the purine/pyrimidine phosphoribosyltransferase family. PyrE subfamily. Homodimer. It depends on Mg(2+) as a cofactor.

The enzyme catalyses orotidine 5'-phosphate + diphosphate = orotate + 5-phospho-alpha-D-ribose 1-diphosphate. Its pathway is pyrimidine metabolism; UMP biosynthesis via de novo pathway; UMP from orotate: step 1/2. Functionally, catalyzes the transfer of a ribosyl phosphate group from 5-phosphoribose 1-diphosphate to orotate, leading to the formation of orotidine monophosphate (OMP). This Staphylococcus epidermidis (strain ATCC 35984 / DSM 28319 / BCRC 17069 / CCUG 31568 / BM 3577 / RP62A) protein is Orotate phosphoribosyltransferase.